A 331-amino-acid polypeptide reads, in one-letter code: Ketol-acid reductoisomerase (NADP(+)) (331 aa).

The KARI N-terminal Rossmann domain maps to 2–182 (ARMYYDEDAN…GGTRGGVLET (181 aa)). NADP(+) contacts are provided by residues 25–28 (YGSQ), serine 51, serine 53, and 83–86 (DEVQ). Histidine 108 is a catalytic residue. Glycine 134 is a binding site for NADP(+). The region spanning 183–328 (TFREETETDL…KDLRAMFSWL (146 aa)) is the KARI C-terminal knotted domain. Aspartate 191, glutamate 195, glutamate 227, and glutamate 231 together coordinate Mg(2+). Serine 252 is a binding site for substrate.

The protein belongs to the ketol-acid reductoisomerase family. Mg(2+) serves as cofactor.

It carries out the reaction (2R)-2,3-dihydroxy-3-methylbutanoate + NADP(+) = (2S)-2-acetolactate + NADPH + H(+). The catalysed reaction is (2R,3R)-2,3-dihydroxy-3-methylpentanoate + NADP(+) = (S)-2-ethyl-2-hydroxy-3-oxobutanoate + NADPH + H(+). It functions in the pathway amino-acid biosynthesis; L-isoleucine biosynthesis; L-isoleucine from 2-oxobutanoate: step 2/4. The protein operates within amino-acid biosynthesis; L-valine biosynthesis; L-valine from pyruvate: step 2/4. Its function is as follows. Involved in the biosynthesis of branched-chain amino acids (BCAA). Catalyzes an alkyl-migration followed by a ketol-acid reduction of (S)-2-acetolactate (S2AL) to yield (R)-2,3-dihydroxy-isovalerate. In the isomerase reaction, S2AL is rearranged via a Mg-dependent methyl migration to produce 3-hydroxy-3-methyl-2-ketobutyrate (HMKB). In the reductase reaction, this 2-ketoacid undergoes a metal-dependent reduction by NADPH to yield (R)-2,3-dihydroxy-isovalerate. The protein is Ketol-acid reductoisomerase (NADP(+)) of Nostoc sp. (strain PCC 7120 / SAG 25.82 / UTEX 2576).